We begin with the raw amino-acid sequence, 362 residues long: Aminomethyltransferase (362 aa).

The protein belongs to the GcvT family. In terms of assembly, the glycine cleavage system is composed of four proteins: P, T, L and H.

The catalysed reaction is N(6)-[(R)-S(8)-aminomethyldihydrolipoyl]-L-lysyl-[protein] + (6S)-5,6,7,8-tetrahydrofolate = N(6)-[(R)-dihydrolipoyl]-L-lysyl-[protein] + (6R)-5,10-methylene-5,6,7,8-tetrahydrofolate + NH4(+). Functionally, the glycine cleavage system catalyzes the degradation of glycine. The sequence is that of Aminomethyltransferase from Chromobacterium violaceum (strain ATCC 12472 / DSM 30191 / JCM 1249 / CCUG 213 / NBRC 12614 / NCIMB 9131 / NCTC 9757 / MK).